The chain runs to 471 residues: UDP-glycosyltransferase 71A15 (471 aa).

UDP-alpha-D-glucose is bound by residues serine 282, 348 to 349, 366 to 374, and 388 to 391; these read WA, HCGWNSTLE, and YAEQ.

Belongs to the UDP-glycosyltransferase family.

Functionally, glycosyltransferase that possesses chalcone and flavonol 2'-O-glycosyltransferase activity. Converts phloretin to phlorizin (phloretin 2'-O-glucoside), a potent antioxidant. Possesses glycosyltransferase activity toward, naringenin, naringenin chalcone, eriodictyol, eriodictyol chalcone, apigenin, luteolin, kaempferol, quercetin, isoliquiritigenin, butein and caffeic acid. Can convert phloretin to phloretin 4'-O-glucoside and phloretin 4-O-glucoside. The chain is UDP-glycosyltransferase 71A15 from Malus domestica (Apple).